Reading from the N-terminus, the 579-residue chain is MFS-type transporter olcL (579 aa).

A compositionally biased stretch (polar residues) spans 1–24 (MANIGGSNAVSSAQGSQISDSPTT). Positions 1–75 (MANIGGSNAV…GFGEDGCQSD (75 aa)) are disordered. Positions 25 to 35 (VDDRLDEHKET) are enriched in basic and acidic residues. A compositionally biased stretch (polar residues) spans 36–54 (STQSIDHSENITQSPTSLQ). N-linked (GlcNAc...) asparagine glycosylation occurs at Asn-45. A run of 9 helical transmembrane segments spans residues 85–105 (LAAI…DNTI), 121–141 (GDVG…TLVF), 159–179 (AVFE…GLII), 183–203 (IAGL…SQSV), 214–234 (LVGG…GAFT), 241–261 (WCFY…LLFF), 282–302 (LIGL…LQWG), 310–330 (SGRI…FIMV), and 355–375 (LFNF…PVWF). An N-linked (GlcNAc...) asparagine glycan is attached at Asn-380. 5 helical membrane-spanning segments follow: residues 388-408 (LMNL…GYGV), 411-431 (IGYY…GAGL), 439-459 (FGPS…GLGL), 479-501 (IAIV…QNVF), and 553-573 (FYVG…IQWI).

Belongs to the major facilitator superfamily. TCR/Tet family.

The protein localises to the peroxisome membrane. In terms of biological role, MFS-type transporter; part of the gene cluster that mediates the biosynthesis of 15-deoxyoxalicine B. The first step of the pathway is the synthesis of nicotinyl-CoA from nicotinic acid by the nicotinic acid-CoA ligase olcI. Nicotinyl-CoA is then a substrate of polyketide synthase olcA to produce 4-hydroxy-6-(3-pyridinyl)-2H-pyran-2-one (HPPO) which is further prenylated by the polyprenyl transferase olcH to yield geranylgeranyl-HPPO. Geranylgeranyl pyrophosphate is provided by the cluster-specific geranylgeranyl pyrophosphate synthase olcC. The FAD-dependent monooxygenase olcE catalyzes the epoxidation of geranylgeranyl-HPPO and the terpene cyclase olcD catalyzes the cyclization of the terpenoid component, resulting in the formation of the tricyclic terpene moiety seen in predecaturin E. The cytochrome P450 monooxygenase then catalyzes the allylic oxidation of predecaturin E, which is followed by spirocylization with concomitant loss of one molecule of water to form decaturin E. Decaturin E is the substrate of the cytochrome P450 monooxygenase olcJ which hydroxylates it at the C-29 position to form decaturin F. The short-chain dehydrogenase/reductase olcF may catalyze the oxidation of decaturin F to generate the 29-hydroxyl-27-one intermediate, and subsequent hemiacetal formation probably leads to the formation of decaturin C. The dioxygenase olcK may be a peroxisomal enzyme that catalyzes the hydroxylation of decaturin C into decaturin A once decaturin C is shuttled into the peroxisome by the MFS transporter olcL. Finally the cytochrome P450 monooxygenase olcB catalyzes the oxidative rearrangement to yield 15-deoxyoxalicine B. In the absence of olcJ, decaturin E may be shunted to a pathway in which it is oxidized to a ketone, possibly by olcF, to form decaturin D, which undergoes further allylic oxidation to yield decaturin G. Moreover, in the absence of oclK or oclL, oclB can convert decaturin C into 15-deoxyoxalicine A. The sequence is that of MFS-type transporter olcL from Penicillium canescens.